Here is a 326-residue protein sequence, read N- to C-terminus: Nucleotide sugar transporter SLC35D2 (326 aa).

The Extracellular segment spans residues 1–15 (MEEPNAAPLPSRLAR). Residues 16-36 (LLSALFYGTCSFLIVLVNKAL) form a helical membrane-spanning segment. Topologically, residues 37–41 (LTTYG) are cytoplasmic. Residues 42 to 62 (FPSPIVLGIGQMATTIMILYV) traverse the membrane as a helical segment. Residues 63-130 (FKLNKIIHFP…LLEAIILGTQ (68 aa)) are Extracellular-facing. Residues 131–151 (YSLNIILSVLAIVLGAFIAAG) traverse the membrane as a helical segment. At 152-155 (SDLT) the chain is on the cytoplasmic side. The helical transmembrane segment at 156–176 (FNLEGYVFVFLNDIFTAANGV) threads the bilayer. The Extracellular segment spans residues 177–189 (YTKQKMDPKELGK). The helical transmembrane segment at 190 to 210 (YGVLFYNACFMLIPTVIISVS) threads the bilayer. At 211-225 (TGDFQQATEFRHWKN) the chain is on the cytoplasmic side. The chain crosses the membrane as a helical span at residues 226 to 246 (VLFIIQFLLSCLLGFLLMYST). The Extracellular portion of the chain corresponds to 247 to 253 (ALCSYYN). A helical membrane pass occupies residues 254–276 (SALTTAVVGAIKNVSVAYIGMLV). The Cytoplasmic portion of the chain corresponds to 277–280 (GGDY). Residues 281–303 (IFSLLNFIGLNICMAGGLRYSFL) traverse the membrane as a helical segment. Topologically, residues 304–326 (TLSSQLKPKQPVDEESIPLDLKS) are extracellular.

This sequence belongs to the TPT transporter family. SLC35D subfamily.

The protein localises to the golgi apparatus membrane. The enzyme catalyses UMP(out) + UDP-N-acetyl-alpha-D-glucosamine(in) = UMP(in) + UDP-N-acetyl-alpha-D-glucosamine(out). The catalysed reaction is UMP(out) + UDP-alpha-D-glucose(in) = UMP(in) + UDP-alpha-D-glucose(out). Its function is as follows. Nucleotide sugar antiporter transporting UDP-N-acetylglucosamine (UDP-GlcNAc) and UDP-glucose (UDP-Glc) from the cytosol into the lumen of the Golgi in exchange of UMP. By supplying UDP-N-acetylglucosamine, a donor substrate to heparan sulfate synthases, probably takes part in the synthesis of these glycoconjugates. This Mus musculus (Mouse) protein is Nucleotide sugar transporter SLC35D2.